The primary structure comprises 456 residues: tRNA modification GTPase MnmE (456 aa).

The (6S)-5-formyl-5,6,7,8-tetrahydrofolate site is built by R25, E87, and R126. Positions G221–N377 constitute a TrmE-type G domain. Position 231 (N231) interacts with K(+). Residues N231–S236, T250–T256, and D275–G278 contribute to the GTP site. S235 provides a ligand contact to Mg(2+). T250, L252, and T255 together coordinate K(+). Mg(2+) is bound at residue T256. Position 456 (K456) interacts with (6S)-5-formyl-5,6,7,8-tetrahydrofolate.

Belongs to the TRAFAC class TrmE-Era-EngA-EngB-Septin-like GTPase superfamily. TrmE GTPase family. Homodimer. Heterotetramer of two MnmE and two MnmG subunits. K(+) is required as a cofactor.

The protein resides in the cytoplasm. Its function is as follows. Exhibits a very high intrinsic GTPase hydrolysis rate. Involved in the addition of a carboxymethylaminomethyl (cmnm) group at the wobble position (U34) of certain tRNAs, forming tRNA-cmnm(5)s(2)U34. The sequence is that of tRNA modification GTPase MnmE from Synechocystis sp. (strain ATCC 27184 / PCC 6803 / Kazusa).